A 204-amino-acid chain; its full sequence is Peroxynitrite isomerase (204 aa).

Residues 21-27 (GEWEGSG) carry the GXWXGXG motif. H195 lines the heme b pocket.

The protein belongs to the nitrobindin family. As to quaternary structure, homodimer. It depends on heme b as a cofactor.

It carries out the reaction peroxynitrite = nitrate. Its pathway is nitrogen metabolism. Its function is as follows. Heme-binding protein able to scavenge peroxynitrite and to protect free L-tyrosine against peroxynitrite-mediated nitration, by acting as a peroxynitrite isomerase that converts peroxynitrite to nitrate. Therefore, this protein likely plays a role in peroxynitrite sensing and in the detoxification of reactive nitrogen and oxygen species (RNS and ROS, respectively). Is able to bind nitric oxide (NO) in vitro, but may act as a sensor of peroxynitrite levels in vivo. This is Peroxynitrite isomerase from Arthrobacter sp. (strain FB24).